The sequence spans 689 residues: Long-chain-fatty-acid--CoA ligase 2 (689 aa).

252–263 (YTSGSTGKPKGV) is an ATP binding site. Residues 518–567 (DGWFKTGDVGEIAKGNTLRLIDRKKNIVKSLNGEYIALEKIEAQFFTSPL) carry the FACS motif.

The protein belongs to the ATP-dependent AMP-binding enzyme family. The cofactor is Mg(2+).

The protein localises to the golgi apparatus. The protein resides in the vacuole membrane. It carries out the reaction a long-chain fatty acid + ATP + CoA = a long-chain fatty acyl-CoA + AMP + diphosphate. Its function is as follows. Esterification, concomitant with transport, of endogenous long-chain fatty acids into metabolically active CoA thioesters for subsequent degradation or incorporation into phospholipids. Plays an important role in the determination of viability in the stationary phase. The polypeptide is Long-chain-fatty-acid--CoA ligase 2 (lcf2) (Schizosaccharomyces pombe (strain 972 / ATCC 24843) (Fission yeast)).